A 278-amino-acid chain; its full sequence is Potassium/proton antiporter CemA (278 aa).

Transmembrane regions (helical) follow at residues 61–81, 154–174, 203–223, and 238–258; these read VVFL…FLFG, CAIT…SILI, IILF…EVII, and FIFV…KYWI.

It belongs to the CemA family.

The protein localises to the plastid. It localises to the chloroplast inner membrane. The catalysed reaction is K(+)(in) + H(+)(out) = K(+)(out) + H(+)(in). Functionally, contributes to K(+)/H(+) antiport activity by supporting proton efflux to control proton extrusion and homeostasis in chloroplasts in a light-dependent manner to modulate photosynthesis. Prevents excessive induction of non-photochemical quenching (NPQ) under continuous-light conditions. Indirectly promotes efficient inorganic carbon uptake into chloroplasts. The sequence is that of Potassium/proton antiporter CemA from Gracilaria tenuistipitata var. liui (Red alga).